A 61-amino-acid chain; its full sequence is Large ribosomal subunit protein eL37 (61 aa).

Residues Cys19, Cys22, Cys34, and Cys37 each coordinate Zn(2+). The C4-type zinc finger occupies 19 to 37 (CRRCGRNSFNARKGYCAAC).

It belongs to the eukaryotic ribosomal protein eL37 family. Zn(2+) serves as cofactor.

In terms of biological role, binds to the 23S rRNA. The protein is Large ribosomal subunit protein eL37 of Sulfolobus acidocaldarius (strain ATCC 33909 / DSM 639 / JCM 8929 / NBRC 15157 / NCIMB 11770).